A 151-amino-acid chain; its full sequence is Globin CTT-X (151 aa).

One can recognise a Globin domain in the interval 6 to 150 (TLDAHEVEQV…AFSVIFEVLE (145 aa)). The heme b site is built by H64 and H99.

It belongs to the globin family. As to quaternary structure, homodimer.

This chain is Globin CTT-X (CTT-10), found in Chironomus thummi thummi (Midge).